Here is a 108-residue protein sequence, read N- to C-terminus: Large ribosomal subunit protein P1 (108 aa).

Residues 67–108 (PAAAPAEAGGEEKKEEEKKEEEEKEEEVSEEEALAGLSALFG) are disordered. The span at 84–99 (KKEEEEKEEEVSEEEA) shows a compositional bias: acidic residues.

This sequence belongs to the eukaryotic ribosomal protein P1/P2 family. As to quaternary structure, part of the 50S ribosomal subunit. Homodimer, it forms part of the ribosomal stalk which helps the ribosome interact with GTP-bound translation factors. Forms a heptameric uL10/P0(P1)2(P1)2(P1)2 complex, where uL10/P0 forms an elongated spine to which the P1 dimers bind in a sequential fashion.

Functionally, forms part of the ribosomal stalk, playing a central role in the interaction of the ribosome with GTP-bound translation factors. The stalk complex of P.horikoshii binds to E.coli large subunits and confers on them the ability to interact with eukaryotic elongation factors. Each succesive P1 dimer bound along the P0 spine increases the GTPase activity of elongation factors and increases translation by reconsituted ribosomes. The sequence is that of Large ribosomal subunit protein P1 from Pyrococcus horikoshii (strain ATCC 700860 / DSM 12428 / JCM 9974 / NBRC 100139 / OT-3).